The sequence spans 159 residues: 2-C-methyl-D-erythritol 2,4-cyclodiphosphate synthase (159 aa).

Residues Asp-8 and His-10 each coordinate a divalent metal cation. Residues 8–10 (DVH) and 34–35 (HS) contribute to the 4-CDP-2-C-methyl-D-erythritol 2-phosphate site. His-42 contacts a divalent metal cation. 4-CDP-2-C-methyl-D-erythritol 2-phosphate contacts are provided by residues 56 to 58 (DIG), 61 to 65 (FPDTD), 100 to 106 (AQAPKML), 132 to 135 (TTTE), Phe-139, and Arg-142.

This sequence belongs to the IspF family. Homotrimer. A divalent metal cation serves as cofactor.

The enzyme catalyses 4-CDP-2-C-methyl-D-erythritol 2-phosphate = 2-C-methyl-D-erythritol 2,4-cyclic diphosphate + CMP. The protein operates within isoprenoid biosynthesis; isopentenyl diphosphate biosynthesis via DXP pathway; isopentenyl diphosphate from 1-deoxy-D-xylulose 5-phosphate: step 4/6. In terms of biological role, involved in the biosynthesis of isopentenyl diphosphate (IPP) and dimethylallyl diphosphate (DMAPP), two major building blocks of isoprenoid compounds. Catalyzes the conversion of 4-diphosphocytidyl-2-C-methyl-D-erythritol 2-phosphate (CDP-ME2P) to 2-C-methyl-D-erythritol 2,4-cyclodiphosphate (ME-CPP) with a corresponding release of cytidine 5-monophosphate (CMP). The polypeptide is 2-C-methyl-D-erythritol 2,4-cyclodiphosphate synthase (Salmonella typhi).